A 348-amino-acid polypeptide reads, in one-letter code: Adenosine deaminase (348 aa).

The Zn(2+) site is built by His-16 and His-18. Substrate is bound by residues His-18, Asp-20, and Gly-174. His-201 serves as a coordination point for Zn(2+). Glu-204 acts as the Proton donor in catalysis. Residue Asp-282 participates in Zn(2+) binding.

It belongs to the metallo-dependent hydrolases superfamily. Adenosine and AMP deaminases family. Adenosine deaminase subfamily. It depends on Zn(2+) as a cofactor.

The catalysed reaction is adenosine + H2O + H(+) = inosine + NH4(+). It carries out the reaction 2'-deoxyadenosine + H2O + H(+) = 2'-deoxyinosine + NH4(+). Functionally, catalyzes the hydrolytic deamination of adenosine and 2-deoxyadenosine. This is Adenosine deaminase from Clostridium kluyveri (strain ATCC 8527 / DSM 555 / NBRC 12016 / NCIMB 10680 / K1).